We begin with the raw amino-acid sequence, 771 residues long: DnaJ homolog subfamily C member 16 (771 aa).

Residues 1-25 (MELKRLSISWQFLIVLVLILQSLSA) form the signal peptide. Residues 26 to 532 (LDFDPYRVLG…ESLLHSNWRE (507 aa)) lie on the Cytoplasmic side of the membrane. The 65-residue stretch at 29 to 93 (DPYRVLGVSR…EKRTNYDHYG (65 aa)) folds into the J domain. The region spanning 116-244 (FYFDESFFHF…LRQFVESLLP (129 aa)) is the Thioredoxin domain. The chain crosses the membrane as a helical; Anchor for type IV membrane protein span at residues 533 to 553 (MMPLLSLIFSALFILFGTVIV). Topologically, residues 554–771 (QAFSDSNEER…FYIPSWPELD (218 aa)) are extracellular. A disordered region spans residues 559 to 590 (SNEERESHPPDKEEVPEKAGKTEPSFTKESSS). A compositionally biased stretch (basic and acidic residues) spans 560 to 579 (NEERESHPPDKEEVPEKAGK). N628 is a glycosylation site (N-linked (GlcNAc...) asparagine).

It is found in the endoplasmic reticulum membrane. Plays an important role in regulating the size of autophagosomes during the formation process. In Rattus norvegicus (Rat), this protein is DnaJ homolog subfamily C member 16 (Dnajc16).